The chain runs to 813 residues: Ribosome-releasing factor 2, mitochondrial (813 aa).

The N-terminal 20 residues, 1–20, are a transit peptide targeting the mitochondrion; it reads MLRIVWKPLKIRLPVWRRYQ. The tr-type G domain maps to 26 to 314; it reads NSIRNVGIIA…AIIDYLPSPV (289 aa). Residues 35-42, 99-103, and 153-156 each bind GTP; these read AHIDAGKT, DTPGH, and NKMD.

It belongs to the TRAFAC class translation factor GTPase superfamily. Classic translation factor GTPase family. EF-G/EF-2 subfamily.

The protein localises to the mitochondrion. In terms of biological role, mitochondrial GTPase that mediates the disassembly of ribosomes from messenger RNA at the termination of mitochondrial protein biosynthesis. Not involved in the GTP-dependent ribosomal translocation step during translation elongation. In Schizosaccharomyces pombe (strain 972 / ATCC 24843) (Fission yeast), this protein is Ribosome-releasing factor 2, mitochondrial (mef2).